The chain runs to 102 residues: Integration host factor subunit alpha (102 aa).

Belongs to the bacterial histone-like protein family. As to quaternary structure, heterodimer of an alpha and a beta chain.

Its function is as follows. This protein is one of the two subunits of integration host factor, a specific DNA-binding protein that functions in genetic recombination as well as in transcriptional and translational control. The chain is Integration host factor subunit alpha from Buchnera aphidicola subsp. Acyrthosiphon pisum (strain 5A).